The primary structure comprises 207 residues: Sodium/potassium-transporting ATPase subunit beta-1-interacting protein 1 (207 aa).

The next 3 helical transmembrane spans lie at 2-22, 35-55, and 62-82; these read GKCSGRCTLVAFCCLQLVAAL, APILANFLHIMAVILGIFGTV, and LILYAAWLVLWVGWNAFIICF. N-linked (GlcNAc...) asparagine glycosylation occurs at Asn100. A helical membrane pass occupies residues 147–167; it reads ALSSALQIFLALFGFVFACYV.

The protein belongs to the NKAIN family. As to quaternary structure, interacts with ATP1B1 C-terminus. As to expression, detected in the brain only and specifically in neurons. Expressed in multiple regions such as cerebral cortex, thalamus, hippocampus, olfactory bulb and brainstem as well as in cerebellum with high expression in granular cell layer.

It is found in the cell membrane. This chain is Sodium/potassium-transporting ATPase subunit beta-1-interacting protein 1 (Nkain1), found in Mus musculus (Mouse).